A 144-amino-acid polypeptide reads, in one-letter code: Maximins 3/H9 type 2 (144 aa).

The first 18 residues, 1–18, serve as a signal peptide directing secretion; the sequence is MNFKYIVAVSFLIASAYA. Propeptides lie at residues 19 to 43 and 74 to 123; these read RSVQ…REIR and TAEE…KEKR. Ile143 is modified (isoleucine amide).

The protein belongs to the bombinin family. As to expression, expressed by the skin glands.

Its subcellular location is the secreted. Its function is as follows. Maximin-3 shows antibacterial activity against both Gram-positive and Gram-negative bacteria. It also shows antimicrobial activity against the fungus C.albicans, but not against A.flavus nor P.uticale. It has little hemolytic activity. It possess a significant cytotoxicity against tumor cell lines. It possess a significant anti-HIV activity. It shows high spermicidal activity. Functionally, maximin-H9 shows antimicrobial activity against bacteria and against the fungus C.albicans. Shows strong hemolytic activity. The polypeptide is Maximins 3/H9 type 2 (Bombina maxima (Giant fire-bellied toad)).